Here is a 144-residue protein sequence, read N- to C-terminus: Actin-associated protein FAM107A (144 aa).

Residues 70–90 adopt a coiled-coil conformation; that stretch reads VLEHRRRNQLIKKKEEELEAK. The short motif at 74–84 is the Nuclear localization signal element; that stretch reads RRRNQLIKKKE. The segment at 104 to 123 is disordered; that stretch reads QQRLNQLENPPQRDEDHAPE. Positions 114–123 are enriched in basic and acidic residues; the sequence is PQRDEDHAPE.

Interacts with ACTB. Interacts with F-actin. Interacts with PRDX1. Interacts with COMMD1; this interaction stabilizes COMMD1 in the nucleus. Interacts with MAP1A. As to expression, expressed in septum, the neocortex, the CA3 region of the hippocampus and the cerebellum (at protein level).

The protein resides in the nucleus. It is found in the cytoplasm. It localises to the cytoskeleton. The protein localises to the stress fiber. Its subcellular location is the cell junction. The protein resides in the focal adhesion. It is found in the cell projection. It localises to the ruffle membrane. The protein localises to the synapse. Stress-inducible actin-binding protein that plays a role in synaptic and cognitive functions by modulating actin filamentous (F-actin) dynamics. Mediates polymerization of globular actin to F-actin. Also binds to, stabilizes and bundles F-actin. Involved in synaptic function by regulating neurite outgrowth in an actin-dependent manner and for the acquisition of hippocampus-dependent cognitive function, such as learning and long-term memory. Plays a role in the actin and microtubule cytoskeleton organization; negatively regulates focal adhesion (FA) assembly promoting malignant glial cell migration in an actin-, microtubule- and MAP1A-dependent manner. Also involved in neuroblastoma G1/S phase cell cycle progression and cell proliferation inhibition by stimulating ubiquitination of NF-kappa-B subunit RELA and NF-kappa-B degradation in a COMMD1- and actin-dependent manner. May play a role in tumor development. This is Actin-associated protein FAM107A from Mus musculus (Mouse).